Here is a 70-residue protein sequence, read N- to C-terminus: Movement protein TGBp3 (70 aa).

The Lumenal portion of the chain corresponds to 1-6 (MEANTY). The helical transmembrane segment at 7–27 (LNAIILVLVVTIIAVISTSLV) threads the bilayer. At 28-70 (RTEPCVIKITGESITVLACKLDAETIRAIADLKPLSVERLSFH) the chain is on the cytoplasmic side.

The protein belongs to the Tymovirales TGBp3 protein family.

It localises to the host endoplasmic reticulum membrane. Functionally, plays a role in viral cell-to-cell propagation, by facilitating genome transport to neighboring plant cells through plasmosdesmata. May induce the formation of granular vesicles derived from the Endoplasmic reticulum, which align on actin filaments. In Potato virus X (PVX), this protein is Movement protein TGBp3.